The primary structure comprises 235 residues: MSQRFNFDPSFLQPDSIEKATIIQKELANRICLEDEFNTPEFFGGMDVSNNLFDPKQIIYATAILLDSKMLSVQFHNSVSQRQTFPYIPGFLGFREAPALIDALESLPKLPDMIFVDGQGISHPRRLGIASHIGVLVNIPTIGVAKNILFGEPKKDLGSCVGDYVFLYAYGKEIGALVRTKLRCKPLIISTGHRVSLRTAIEYVLNCVKGYRLPEPTRQAHLAANAFRKQSQAGN.

Mg(2+)-binding residues include Asp47 and Asp117.

Belongs to the endonuclease V family. The cofactor is Mg(2+).

Its subcellular location is the cytoplasm. The enzyme catalyses Endonucleolytic cleavage at apurinic or apyrimidinic sites to products with a 5'-phosphate.. Its function is as follows. DNA repair enzyme involved in the repair of deaminated bases. Selectively cleaves double-stranded DNA at the second phosphodiester bond 3' to a deoxyinosine leaving behind the intact lesion on the nicked DNA. This Protochlamydia amoebophila (strain UWE25) protein is Endonuclease V.